Reading from the N-terminus, the 426-residue chain is Glutamate-1-semialdehyde 2,1-aminomutase (426 aa).

K265 carries the N6-(pyridoxal phosphate)lysine modification.

This sequence belongs to the class-III pyridoxal-phosphate-dependent aminotransferase family. HemL subfamily. In terms of assembly, homodimer. Requires pyridoxal 5'-phosphate as cofactor.

It is found in the cytoplasm. It carries out the reaction (S)-4-amino-5-oxopentanoate = 5-aminolevulinate. It functions in the pathway porphyrin-containing compound metabolism; protoporphyrin-IX biosynthesis; 5-aminolevulinate from L-glutamyl-tRNA(Glu): step 2/2. This is Glutamate-1-semialdehyde 2,1-aminomutase from Paraburkholderia phymatum (strain DSM 17167 / CIP 108236 / LMG 21445 / STM815) (Burkholderia phymatum).